The following is a 132-amino-acid chain: Agouti-signaling protein (132 aa).

The signal sequence occupies residues 1–22 (MDVTRLLLATLLVFLCFFTAYS). N-linked (GlcNAc...) asparagine glycosylation is present at Asn-39. The disordered stretch occupies residues 61–87 (QISRKEAEKKRSSKKEASMKKVARPRT). The segment covering 63-79 (SRKEAEKKRSSKKEASM) has biased composition (basic and acidic residues). Disulfide bonds link Cys-93/Cys-108, Cys-100/Cys-114, Cys-107/Cys-125, Cys-111/Cys-132, and Cys-116/Cys-123. The Agouti domain maps to 93–132 (CVTTRDSCKPPAPACCDPCASCQCRFFRSACSCRVLSLNC).

The protein localises to the secreted. Its function is as follows. Involved in the regulation of melanogenesis. The binding of ASP to MC1R precludes alpha-MSH initiated signaling and thus blocks production of cAMP, leading to a down-regulation of eumelanogenesis (brown/black pigment) and thus increasing synthesis of pheomelanin (yellow/red pigment). The polypeptide is Agouti-signaling protein (ASIP) (Macaca silenus (Lion-tailed macaque)).